Here is a 147-residue protein sequence, read N- to C-terminus: Protein disulfide isomerase-like 5-1 (147 aa).

Residues 1-29 form the signal peptide; the sequence is MDLAPGRRARLLVALALVVLVALAARSGA. A Thioredoxin domain is found at 30 to 137; sequence EVITLTEETF…LKNFVSDEAE (108 aa). Active-site nucleophile residues include Cys59 and Cys62. Cys59 and Cys62 are oxidised to a cystine.

It belongs to the protein disulfide isomerase family.

Functionally, acts as a protein-folding catalyst that interacts with nascent polypeptides to catalyze the formation, isomerization, and reduction or oxidation of disulfide bonds. May play a role in storage protein biogenesis. The chain is Protein disulfide isomerase-like 5-1 (PDIL5-1) from Oryza sativa subsp. japonica (Rice).